The sequence spans 332 residues: Methionine import ATP-binding protein MetN (332 aa).

Positions Ile-2–Val-239 constitute an ABC transporter domain. Gly-36–Ser-43 is an ATP binding site.

Belongs to the ABC transporter superfamily. Methionine importer (TC 3.A.1.24) family. The complex is composed of two ATP-binding proteins (MetN), two transmembrane proteins (MetI) and a solute-binding protein (MetQ).

The protein localises to the cell inner membrane. It catalyses the reaction L-methionine(out) + ATP + H2O = L-methionine(in) + ADP + phosphate + H(+). It carries out the reaction D-methionine(out) + ATP + H2O = D-methionine(in) + ADP + phosphate + H(+). Functionally, part of the ABC transporter complex MetNIQ involved in methionine import. Responsible for energy coupling to the transport system. This is Methionine import ATP-binding protein MetN from Caulobacter vibrioides (strain ATCC 19089 / CIP 103742 / CB 15) (Caulobacter crescentus).